A 277-amino-acid polypeptide reads, in one-letter code: MQLCGSSELLTETDLGESQKQLKKKQKNRVAAQRSRQKHTSKADALHQQHESLEKQNHALRKEIQALQTELAGWGRTLHLHERLCRVDCDPCPVLLPSGCPIQAKQPSGQPAPLGYNGCQEQLGLFQTPGSSPRAQHLSPGPCSHESPGLLPSLLPSLAFDPLMVRTPLAQLSPSPVLSASSPSGSSLLGSFSKLDPLIPSPQDQLAPPQPLRQEQPTSGRLASSDSPAALGPECSQNREHLPALPGSSTHWQKSSVAPSPQALMAFPLLSSAKVHF.

3 disordered regions span residues 15-50 (LGESQKQLKKKQKNRVAAQRSRQKHTSKADALHQQH), 126-146 (FQTPGSSPRAQHLSPGPCSHE), and 191-256 (SFSK…QKSS). The region spanning 18–81 (SQKQLKKKQK…AGWGRTLHLH (64 aa)) is the bZIP domain. Residues 20 to 42 (KQLKKKQKNRVAAQRSRQKHTSK) are basic motif. Over residues 41 to 50 (SKADALHQQH) the composition is skewed to basic and acidic residues. Positions 46–67 (LHQQHESLEKQNHALRKEIQAL) are leucine-zipper. 2 stretches are compositionally biased toward polar residues: residues 213 to 227 (RQEQPTSGRLASSDS) and 247 to 256 (GSSTHWQKSS).

This sequence belongs to the bZIP family. Heterodimer; heterodimerizes with JUN family proteins.

The protein resides in the nucleus. Functionally, AP-1 family transcription factor that controls the differentiation of lineage-specific cells in the immune system. Selectively suppresses CCN1 transcription and hence blocks the downstream cell proliferation signals produced by CCN1 and inhibits CCN1-induced anchorage-independent growth and invasion in several cancer types. Possibly acts by interfering with AP-1 binding to CCN1 promoter. Following infection, participates in the differentiation of CD8(+) thymic conventional dendritic cells in the immune system. Acts via the formation of a heterodimer with JUN family proteins that recognizes and binds DNA sequence 5'-TGA[CG]TCA-3' and regulates expression of target genes. In Mus musculus (Mouse), this protein is Basic leucine zipper transcriptional factor ATF-like 2 (Batf2).